The following is a 111-amino-acid chain: Ribosome-binding factor A (111 aa).

Belongs to the RbfA family. Monomer. Binds 30S ribosomal subunits, but not 50S ribosomal subunits or 70S ribosomes.

It is found in the cytoplasm. Functionally, one of several proteins that assist in the late maturation steps of the functional core of the 30S ribosomal subunit. Associates with free 30S ribosomal subunits (but not with 30S subunits that are part of 70S ribosomes or polysomes). Required for efficient processing of 16S rRNA. May interact with the 5'-terminal helix region of 16S rRNA. In Helicobacter acinonychis (strain Sheeba), this protein is Ribosome-binding factor A.